We begin with the raw amino-acid sequence, 108 residues long: Large ribosomal subunit protein bL21 (108 aa).

It belongs to the bacterial ribosomal protein bL21 family. In terms of assembly, part of the 50S ribosomal subunit. Contacts protein L20.

Functionally, this protein binds to 23S rRNA in the presence of protein L20. The protein is Large ribosomal subunit protein bL21 of Orientia tsutsugamushi (strain Ikeda) (Rickettsia tsutsugamushi).